A 206-amino-acid chain; its full sequence is Inner membrane protein YnjF (206 aa).

The Periplasmic portion of the chain corresponds to 1–37 (MLDRHLHPRIKPLLHQCVRVLDKPGITPDGLTLVGFA). A helical membrane pass occupies residues 38-60 (IGVLALPFLALGWYLAALVVILL). Residues 61-79 (NRLLDGLDGALARRRELTD) lie on the Cytoplasmic side of the membrane. A helical transmembrane segment spans residues 80-102 (AGGFLDISLDFLFYALVPFGFIL). The Periplasmic segment spans residues 103–111 (AAPEQNALA). Residues 112-134 (GGWLLFAFIGTGSSFLAFAALAA) traverse the membrane as a helical segment. The Cytoplasmic portion of the chain corresponds to 135 to 146 (KHQIDNPGYAHK). Residues 147 to 169 (SFYYLGGLTEGTETILLFVLGCL) traverse the membrane as a helical segment. The Periplasmic portion of the chain corresponds to 170-173 (FPAW). The chain crosses the membrane as a helical span at residues 174 to 196 (FAWFAWIFGALCWMTTFTRVWSG). Topologically, residues 197 to 206 (YLTLKSLQRQ) are cytoplasmic.

This sequence belongs to the CDP-alcohol phosphatidyltransferase class-I family.

The protein resides in the cell inner membrane. This is Inner membrane protein YnjF (ynjF) from Escherichia coli (strain K12).